Reading from the N-terminus, the 326-residue chain is Biotin synthase (326 aa).

One can recognise a Radical SAM core domain in the interval 47–274 (NEVQVSSLLS…ASRVRLSAGR (228 aa)). Positions 62, 66, and 69 each coordinate [4Fe-4S] cluster. [2Fe-2S] cluster is bound by residues C106, C137, C197, and R269.

It belongs to the radical SAM superfamily. Biotin synthase family. As to quaternary structure, homodimer. It depends on [4Fe-4S] cluster as a cofactor. Requires [2Fe-2S] cluster as cofactor.

The catalysed reaction is (4R,5S)-dethiobiotin + (sulfur carrier)-SH + 2 reduced [2Fe-2S]-[ferredoxin] + 2 S-adenosyl-L-methionine = (sulfur carrier)-H + biotin + 2 5'-deoxyadenosine + 2 L-methionine + 2 oxidized [2Fe-2S]-[ferredoxin]. The protein operates within cofactor biosynthesis; biotin biosynthesis; biotin from 7,8-diaminononanoate: step 2/2. Functionally, catalyzes the conversion of dethiobiotin (DTB) to biotin by the insertion of a sulfur atom into dethiobiotin via a radical-based mechanism. The chain is Biotin synthase from Methylococcus capsulatus (strain ATCC 33009 / NCIMB 11132 / Bath).